Here is a 341-residue protein sequence, read N- to C-terminus: MKRVKVIQIKGFFRVMALLAPLLLNAYLPVQASEEHAAPVAAVVAAHAEAAVDPALEPAHAEPAGHEDEKAGDVIMHHILNSHSFSFEPFGTIHLPTLPPVFGIDISITKHVVMLWIVSAILLVLFSFVGAAYRKITPKTAPSGVANTMEALVEFIRLDVAKSNIGHGYEAHLPYLLTVFMFILLCNILGLIPYGATATGNINVTLTLAVFTFFITQAASLKAHGLKGYLTHLTAGTHWSLWIIMIPIEVIGLFTKPFALTVRLFANMTAGHIVILSLIFISFILKSYVVAAAVSVPFSIFIYLLEIFVAFLQAFIFTMLSALFIGLATAHEGGEAEAAHH.

A signal peptide spans 1–33 (MKRVKVIQIKGFFRVMALLAPLLLNAYLPVQAS). Helical transmembrane passes span 112-132 (VVML…VGAA), 173-193 (LPYL…GLIP), 195-215 (GATA…TFFI), 242-262 (WIIM…ALTV), 273-293 (IVIL…VAAA), and 307-327 (IFVA…FIGL).

It belongs to the ATPase A chain family. F-type ATPases have 2 components, CF(1) - the catalytic core - and CF(0) - the membrane proton channel. CF(1) has five subunits: alpha(3), beta(3), gamma(1), delta(1), epsilon(1). CF(0) has four main subunits: a, b, b' and c.

Its subcellular location is the cell inner membrane. Key component of the proton channel; it plays a direct role in the translocation of protons across the membrane. The polypeptide is ATP synthase subunit a 2 (Chlorobium luteolum (strain DSM 273 / BCRC 81028 / 2530) (Pelodictyon luteolum)).